Consider the following 189-residue polypeptide: Marginal zone B- and B1-cell-specific protein (189 aa).

An N-terminal signal peptide occupies residues 1-22 (MRLSLPLLLLLLGAWAIPGGLG). Disulfide bonds link cysteine 50-cysteine 178, cysteine 53-cysteine 171, and cysteine 95-cysteine 143. The Prevents secretion from ER signature appears at 186–189 (REEL).

It belongs to the MZB1 family. Part of the ER chaperone complex, a multi-protein complex in the endoplasmic reticulum containing a large number of molecular chaperones which associates with unassembled incompletely folded immunoglobulin heavy chains. Isoform 2 interacts with CASP2 and CASP9. Interacts with HSP90B1 and PDIA3 in a calcium-dependent manner. In terms of processing, forms an interchain disulfide bond with IgM monomers. Widely expressed with highest levels in adult brain, small intestine and lymphoid tissues such as thymus and spleen. Expression is frequently lower in intestinal-type gastric cancer. In obese patients, more abundant in omental than in subcutaneous fat.

It is found in the endoplasmic reticulum lumen. The protein resides in the secreted. The protein localises to the cytoplasm. In terms of biological role, associates with immunoglobulin M (IgM) heavy and light chains and promotes IgM assembly and secretion. May exert its effect by acting as a molecular chaperone or as an oxidoreductase as it displays a low level of oxidoreductase activity. Isoform 2 may be involved in regulation of apoptosis. Helps to diversify peripheral B-cell functions by regulating Ca(2+) stores, antibody secretion and integrin activation. Functionally, acts as a hormone-regulated adipokine/pro-inflammatory cytokine that is implicated in causing chronic inflammation, affecting cellular expansion and blunting insulin response in adipocytes. May have a role in the onset of insulin resistance. The protein is Marginal zone B- and B1-cell-specific protein (MZB1) of Homo sapiens (Human).